The primary structure comprises 281 residues: Elongation factor Ts (281 aa).

Residues 80–83 are involved in Mg(2+) ion dislocation from EF-Tu; it reads TDFV.

It belongs to the EF-Ts family.

The protein resides in the cytoplasm. In terms of biological role, associates with the EF-Tu.GDP complex and induces the exchange of GDP to GTP. It remains bound to the aminoacyl-tRNA.EF-Tu.GTP complex up to the GTP hydrolysis stage on the ribosome. The sequence is that of Elongation factor Ts from Vibrio parahaemolyticus serotype O3:K6 (strain RIMD 2210633).